A 244-amino-acid polypeptide reads, in one-letter code: tRNA (guanine-N(1)-)-methyltransferase (244 aa).

S-adenosyl-L-methionine is bound by residues Gly110 and Ile129–Leu134.

It belongs to the RNA methyltransferase TrmD family. Homodimer.

It localises to the cytoplasm. It catalyses the reaction guanosine(37) in tRNA + S-adenosyl-L-methionine = N(1)-methylguanosine(37) in tRNA + S-adenosyl-L-homocysteine + H(+). Its function is as follows. Specifically methylates guanosine-37 in various tRNAs. The protein is tRNA (guanine-N(1)-)-methyltransferase of Syntrophomonas wolfei subsp. wolfei (strain DSM 2245B / Goettingen).